The chain runs to 953 residues: MNQEYIKVRGAKEHNLKNINVDIPRNKFVVITGLSGSGKSSLAFDTIYAEGQRRYVESLSSYARQFLHLQNKPNVESISGLSPAIAIDQKTTSKNPRSTVGTITEIYDYLRLLYARVGIPYSPATGLPIHSQTVSEMVDIINELPQGTKIYLLAPIVRGHKGEFKREIMNLKKQGFQKLIVNGETCEIDDLPKLDKNKKHNIEVIVDRIVLDENLGNRLADSLESSLNLADGITYLEIVELPTAANTEYEKNQRITFSEKYSCPVSGFQLTEIEPRIFSFNSPFGACPKCEGIGKEFFFDRDLIVPDHRISIKDGAIVPWGSTSSKFILETLKALAEHYRFSIESPFSALSDNIKTILFEGSGEEAIRFEFHDGSKTQVIHQPFAGIIPSLQEKDRTIESVLIKEELAKFKSEHKCTACNGYRLKDEALCVKIVNIHIGEVADMSIATLQQWFAHLEQKLNKKQLFIAERILKEINERLKFLMNVGLDYLTLSRESGTLSGGESQRIRLASQIGSGLSGVLYVLDEPSIGLHQRDNTRLIETLKRLRDLGNTVLVVEHDEETMYEADHIIDIGPGAGIHGGRVIAEGNAEEIKNFEESITGRYLSGRQTIKVPTQTRTGHDNRAIELIGAVSNNLDNVDIKIPLGTFTAITGVSGSGKSSLMIHTLYKAALKHLEPTAKVFPGKYQKLKGLEYIDKIIDINQSPIGRTPRSNPATYTGAFTHIRDWFVELPESKARGYKVGRFSFNVKGGRCEACQGDGLIKIEMHFLPDVYVKCDICNGHRYNRETLEIKYKGKSIADILMMTVEDAMQFFEKIPLIYEKLITLNEVGLGYIKIGQSATTLSGGEAQRVKLAKELSRRSTGKTLYILDEPTTGLHIDDINKLLKVLHKLVDMGNTVLVIEHNLDVIKTADYIIDVGPEGGDKGGKIVVHGTPADIAACSESHTGRYLKQYLK.

33–40 (GLSGSGKS) contributes to the ATP binding site. ABC transporter domains are found at residues 320-599 (WGST…EESI) and 619-949 (GHDN…RYLK). 652-659 (GVSGSGKS) contacts ATP. The C4-type zinc-finger motif lies at 752–778 (CEACQGDGLIKIEMHFLPDVYVKCDIC).

It belongs to the ABC transporter superfamily. UvrA family. In terms of assembly, forms a heterotetramer with UvrB during the search for lesions.

Its subcellular location is the cytoplasm. Functionally, the UvrABC repair system catalyzes the recognition and processing of DNA lesions. UvrA is an ATPase and a DNA-binding protein. A damage recognition complex composed of 2 UvrA and 2 UvrB subunits scans DNA for abnormalities. When the presence of a lesion has been verified by UvrB, the UvrA molecules dissociate. The chain is UvrABC system protein A from Rickettsia bellii (strain RML369-C).